The following is a 233-amino-acid chain: Ribose-5-phosphate isomerase A (233 aa).

Substrate is bound by residues 28-31 (SGST), 83-86 (DGAD), and 96-99 (KGGG). Glutamate 105 functions as the Proton acceptor in the catalytic mechanism. Lysine 123 provides a ligand contact to substrate.

It belongs to the ribose 5-phosphate isomerase family. As to quaternary structure, homodimer.

The catalysed reaction is aldehydo-D-ribose 5-phosphate = D-ribulose 5-phosphate. Its pathway is carbohydrate degradation; pentose phosphate pathway; D-ribose 5-phosphate from D-ribulose 5-phosphate (non-oxidative stage): step 1/1. Its function is as follows. Catalyzes the reversible conversion of ribose-5-phosphate to ribulose 5-phosphate. The protein is Ribose-5-phosphate isomerase A of Bartonella bacilliformis (strain ATCC 35685 / KC583 / Herrer 020/F12,63).